Consider the following 376-residue polypeptide: MTETPQRPRRLRVLAAMSGGVDSAVAAARAAEAGHDVTGVHLALSANPQSFRTGARGCCTIEDSRDARRAADVIGIPFYVWDLAERFREDVVEDFIAEYEAGRTPNPCLRCNEKIKFAALLDKALALGFDAVCTGHYAQVIVREDGTRELHRASDMAKDQSYVLGVLDDRQLAHALFPLGDTVTTKDEIRAEAERRGLAVAKKPDSHDICFIADGDTQGFLANRLGKAEGDIVDESGSVVGSHEGAYGFTIGQRKGLRIGTPAPDGKPRYVLDISPVDNTVTVGPAAALDVTALTAIKPRWCGAAPTGPGTYTAQLRAHGGETQVTAELVDGELQVTFAEPVRGVAPGQAVVLYDGTRVVGSATIATTTRTATAVA.

Residues 16–23 (AMSGGVDS) and Leu42 each bind ATP. The Nucleophile role is filled by Cys111. An intrachain disulfide couples Cys111 to Cys210. Residue Gly135 coordinates ATP. The interval 158-160 (KDQ) is interaction with tRNA. Residue Cys210 is the Cysteine persulfide intermediate of the active site.

Belongs to the MnmA/TRMU family.

The protein localises to the cytoplasm. It carries out the reaction S-sulfanyl-L-cysteinyl-[protein] + uridine(34) in tRNA + AH2 + ATP = 2-thiouridine(34) in tRNA + L-cysteinyl-[protein] + A + AMP + diphosphate + H(+). In terms of biological role, catalyzes the 2-thiolation of uridine at the wobble position (U34) of tRNA, leading to the formation of s(2)U34. The protein is tRNA-specific 2-thiouridylase MnmA of Streptomyces avermitilis (strain ATCC 31267 / DSM 46492 / JCM 5070 / NBRC 14893 / NCIMB 12804 / NRRL 8165 / MA-4680).